Consider the following 229-residue polypeptide: PKHD-type hydroxylase BRADO6316 (229 aa).

The region spanning 78-180 (QIFPPLFNRY…RVASFFWLQS (103 aa)) is the Fe2OG dioxygenase domain. Fe cation is bound by residues His98, Asp100, and His161. Arg171 serves as a coordination point for 2-oxoglutarate.

Fe(2+) serves as cofactor. L-ascorbate is required as a cofactor.

The sequence is that of PKHD-type hydroxylase BRADO6316 from Bradyrhizobium sp. (strain ORS 278).